The following is a 347-amino-acid chain: Dual-specificity RNA methyltransferase RlmN (347 aa).

Glu-93 acts as the Proton acceptor in catalysis. A Radical SAM core domain is found at 99-327 (DEGRNTLCIS…VITRDSRGSD (229 aa)). Residues Cys-106 and Cys-332 are joined by a disulfide bond. Cys-113, Cys-117, and Cys-120 together coordinate [4Fe-4S] cluster. S-adenosyl-L-methionine is bound by residues 158-159 (GE), Ser-190, 213-215 (SLN), and Asn-289. Cys-332 serves as the catalytic S-methylcysteine intermediate.

The protein belongs to the radical SAM superfamily. RlmN family. [4Fe-4S] cluster serves as cofactor.

It localises to the cytoplasm. The enzyme catalyses adenosine(2503) in 23S rRNA + 2 reduced [2Fe-2S]-[ferredoxin] + 2 S-adenosyl-L-methionine = 2-methyladenosine(2503) in 23S rRNA + 5'-deoxyadenosine + L-methionine + 2 oxidized [2Fe-2S]-[ferredoxin] + S-adenosyl-L-homocysteine. It catalyses the reaction adenosine(37) in tRNA + 2 reduced [2Fe-2S]-[ferredoxin] + 2 S-adenosyl-L-methionine = 2-methyladenosine(37) in tRNA + 5'-deoxyadenosine + L-methionine + 2 oxidized [2Fe-2S]-[ferredoxin] + S-adenosyl-L-homocysteine. In terms of biological role, specifically methylates position 2 of adenine 2503 in 23S rRNA and position 2 of adenine 37 in tRNAs. m2A2503 modification seems to play a crucial role in the proofreading step occurring at the peptidyl transferase center and thus would serve to optimize ribosomal fidelity. The protein is Dual-specificity RNA methyltransferase RlmN of Pelobacter propionicus (strain DSM 2379 / NBRC 103807 / OttBd1).